Here is a 291-residue protein sequence, read N- to C-terminus: Alpha-soluble NSF attachment protein (291 aa).

TPR repeat units lie at residues 14 to 51 (ADKRLRGGNFFKMFGGGSSRYDDAASDYTKAANLFKMS), 77 to 110 (AASSYVLAAGCYKKGNVIDAITCLKAAIEYYTDE), 117 to 150 (AKHQKEIAELYEAEGDFDQAIASYQIASDYFDGE), and 157 to 190 (HQCLLKIALFSAQLERYEKSIEIYEQVAAASLDN).

It belongs to the SNAP family. Interacts with nsfA and probably SNARE proteins.

Its subcellular location is the cytoplasmic vesicle membrane. Functionally, may be required for vesicular transport between the endoplasmic reticulum and the Golgi apparatus. Involved in vesicle fusion with nsfA and probably SNARE proteins. In Dictyostelium discoideum (Social amoeba), this protein is Alpha-soluble NSF attachment protein (snpA).